The primary structure comprises 264 residues: Anamorsin homolog 2 (264 aa).

Residues 1–142 (MAATAAALAV…KVSWSMGSSF (142 aa)) form an N-terminal SAM-like domain region. Residues 143–174 (PLKKATKGLPKIQIDDDSELIDEDSLLTEDDL) form a linker region. Residues Cys-185, Cys-194, Cys-197, and Cys-199 each contribute to the [2Fe-2S] cluster site. Residues 185-199 (CEVGATRKACKNCTC) form a fe-S binding site A region. The [4Fe-4S] cluster site is built by Cys-225, Cys-228, Cys-236, and Cys-239. Short sequence motifs (cx2C motif) lie at residues 225-228 (CGNC) and 236-239 (CGTC). The segment at 225 to 239 (CGNCGLGDAFRCGTC) is fe-S binding site B.

Belongs to the anamorsin family. In terms of assembly, monomer. [2Fe-2S] cluster is required as a cofactor. [4Fe-4S] cluster serves as cofactor.

The protein localises to the cytoplasm. It localises to the mitochondrion intermembrane space. Functionally, component of the cytosolic iron-sulfur (Fe-S) protein assembly (CIA) machinery. Required for the maturation of extramitochondrial Fe-S proteins. Part of an electron transfer chain functioning in an early step of cytosolic Fe-S biogenesis, facilitating the de novo assembly of a [4Fe-4S] cluster on the cytosolic Fe-S scaffold complex. Electrons are transferred from NADPH via a FAD- and FMN-containing diflavin oxidoreductase. Together with the diflavin oxidoreductase, also required for the assembly of the diferric tyrosyl radical cofactor of ribonucleotide reductase (RNR), probably by providing electrons for reduction during radical cofactor maturation in the catalytic small subunit. This is Anamorsin homolog 2 from Oryza sativa subsp. japonica (Rice).